Consider the following 345-residue polypeptide: S-adenosylmethionine:tRNA ribosyltransferase-isomerase (345 aa).

It belongs to the QueA family. As to quaternary structure, monomer.

Its subcellular location is the cytoplasm. It catalyses the reaction 7-aminomethyl-7-carbaguanosine(34) in tRNA + S-adenosyl-L-methionine = epoxyqueuosine(34) in tRNA + adenine + L-methionine + 2 H(+). It participates in tRNA modification; tRNA-queuosine biosynthesis. Transfers and isomerizes the ribose moiety from AdoMet to the 7-aminomethyl group of 7-deazaguanine (preQ1-tRNA) to give epoxyqueuosine (oQ-tRNA). This is S-adenosylmethionine:tRNA ribosyltransferase-isomerase from Alkalilimnicola ehrlichii (strain ATCC BAA-1101 / DSM 17681 / MLHE-1).